Reading from the N-terminus, the 310-residue chain is Protoheme IX farnesyltransferase 2 (310 aa).

Helical transmembrane passes span 25 to 45 (PGII…AAKG), 49 to 69 (LVLM…GCAI), 98 to 118 (HVLL…ALFT), 121 to 141 (LALL…SLYM), 145 to 165 (SVYG…VGYC), 176 to 196 (VILL…IAIF), 222 to 242 (IVLY…AGYT), 245 to 265 (AFMA…LKGY), and 277 to 297 (QVFG…ALDF).

It belongs to the UbiA prenyltransferase family. Protoheme IX farnesyltransferase subfamily.

It is found in the cell inner membrane. It carries out the reaction heme b + (2E,6E)-farnesyl diphosphate + H2O = Fe(II)-heme o + diphosphate. It participates in porphyrin-containing compound metabolism; heme O biosynthesis; heme O from protoheme: step 1/1. Functionally, converts heme B (protoheme IX) to heme O by substitution of the vinyl group on carbon 2 of heme B porphyrin ring with a hydroxyethyl farnesyl side group. In Shewanella sp. (strain MR-4), this protein is Protoheme IX farnesyltransferase 2.